Reading from the N-terminus, the 208-residue chain is Small ribosomal subunit protein uS4 (208 aa).

Residues 98–163 (SRLDNVVYRA…LTPFVIARAV (66 aa)) form the S4 RNA-binding domain.

It belongs to the universal ribosomal protein uS4 family. In terms of assembly, part of the 30S ribosomal subunit. Contacts protein S5. The interaction surface between S4 and S5 is involved in control of translational fidelity.

Functionally, one of the primary rRNA binding proteins, it binds directly to 16S rRNA where it nucleates assembly of the body of the 30S subunit. With S5 and S12 plays an important role in translational accuracy. The sequence is that of Small ribosomal subunit protein uS4 from Acidothermus cellulolyticus (strain ATCC 43068 / DSM 8971 / 11B).